We begin with the raw amino-acid sequence, 467 residues long: Cysteine--tRNA ligase (467 aa).

Residue Cys27 coordinates Zn(2+). Positions 29-39 match the 'HIGH' region motif; the sequence is ATVQGLPHIGH. The Zn(2+) site is built by Cys209, His234, and Glu238. A 'KMSKS' region motif is present at residues 265–269; it reads KMSKS. Lys268 provides a ligand contact to ATP.

The protein belongs to the class-I aminoacyl-tRNA synthetase family. Monomer. Requires Zn(2+) as cofactor.

The protein localises to the cytoplasm. The catalysed reaction is tRNA(Cys) + L-cysteine + ATP = L-cysteinyl-tRNA(Cys) + AMP + diphosphate. This chain is Cysteine--tRNA ligase, found in Mycolicibacterium gilvum (strain PYR-GCK) (Mycobacterium gilvum (strain PYR-GCK)).